The chain runs to 405 residues: Secreted aspartic protease FUS4 (405 aa).

The N-terminal stretch at 1–24 (MLAIATLHVALQVFGAFSLSHAAA) is a signal peptide. In terms of domain architecture, Peptidase A1 spans 49–400 (YLFNVTVGSP…NFEERSFGLA (352 aa)). 4 N-linked (GlcNAc...) asparagine glycosylation sites follow: Asn52, Asn61, Asn107, and Asn123. Cys318 and Cys356 are oxidised to a cystine.

This sequence belongs to the peptidase A1 family.

It localises to the secreted. In terms of biological role, secreted aspartic protease; part of the gene cluster that mediates the biosynthesis of the mycotoxin fusarin C. Within the cluster, FUS1, FUS2, FUS8 and FUS9 are sufficient for fusarin production. The other FUS cluster members are not essential for fusarin C biosynthesis. This chain is Secreted aspartic protease FUS4, found in Gibberella fujikuroi (strain CBS 195.34 / IMI 58289 / NRRL A-6831) (Bakanae and foot rot disease fungus).